We begin with the raw amino-acid sequence, 108 residues long: Putative disulfide oxidoreductase YuzD (108 aa).

Residues cysteine 16 and cysteine 19 are joined by a disulfide bond.

The chain is Putative disulfide oxidoreductase YuzD (yuzD) from Bacillus subtilis (strain 168).